Here is a 206-residue protein sequence, read N- to C-terminus: Small ribosomal subunit protein uS4 (206 aa).

The region spanning 96 to 157 is the S4 RNA-binding domain; sequence SRLDNVVYRM…KAKKQVRIQE (62 aa).

Belongs to the universal ribosomal protein uS4 family. In terms of assembly, part of the 30S ribosomal subunit. Contacts protein S5. The interaction surface between S4 and S5 is involved in control of translational fidelity.

In terms of biological role, one of the primary rRNA binding proteins, it binds directly to 16S rRNA where it nucleates assembly of the body of the 30S subunit. Its function is as follows. With S5 and S12 plays an important role in translational accuracy. The chain is Small ribosomal subunit protein uS4 from Neisseria gonorrhoeae (strain ATCC 700825 / FA 1090).